Here is a 122-residue protein sequence, read N- to C-terminus: Large ribosomal subunit protein uL14 (122 aa).

The protein belongs to the universal ribosomal protein uL14 family. Part of the 50S ribosomal subunit. Forms a cluster with proteins L3 and L19. In the 70S ribosome, L14 and L19 interact and together make contacts with the 16S rRNA in bridges B5 and B8.

Functionally, binds to 23S rRNA. Forms part of two intersubunit bridges in the 70S ribosome. The sequence is that of Large ribosomal subunit protein uL14 from Brevibacillus brevis (strain 47 / JCM 6285 / NBRC 100599).